A 304-amino-acid chain; its full sequence is MKFSLENIISIRDFKKSDVEYILNLAEEMEPIAKSQKVCHEKDGKLLGVMFYEPSTRTRLSFETAMKRLGGDVVGFNQKQGTSIQKGEVLYDTAQIVSQYTDAIVLRHDMEGAARFVSNIVDVPVINAGDGAGQHPTQTMLDLYTIKRTLGELKNLKIALVGDLKYGRTVHSLVYALAMFNVEIVFISPSELEMPPEILRDLEKLNCKFSIKNSLIENIDDVDVIYMTRIQKERFPDPKEYLKVKGQYTLTSKNLKDSNTIIMHPLPRVDEIDFNVDNLSNAMYFKQAFYGVPVRMALLDSIIK.

2 residues coordinate carbamoyl phosphate: Arg-57 and Thr-58. Lys-86 provides a ligand contact to L-aspartate. Positions 107, 135, and 138 each coordinate carbamoyl phosphate. The L-aspartate site is built by Arg-168 and Arg-229. Residues Leu-266 and Pro-267 each coordinate carbamoyl phosphate.

Belongs to the aspartate/ornithine carbamoyltransferase superfamily. ATCase family. In terms of assembly, heterooligomer of catalytic and regulatory chains.

The catalysed reaction is carbamoyl phosphate + L-aspartate = N-carbamoyl-L-aspartate + phosphate + H(+). Its pathway is pyrimidine metabolism; UMP biosynthesis via de novo pathway; (S)-dihydroorotate from bicarbonate: step 2/3. Catalyzes the condensation of carbamoyl phosphate and aspartate to form carbamoyl aspartate and inorganic phosphate, the committed step in the de novo pyrimidine nucleotide biosynthesis pathway. In Methanosphaera stadtmanae (strain ATCC 43021 / DSM 3091 / JCM 11832 / MCB-3), this protein is Aspartate carbamoyltransferase catalytic subunit.